The chain runs to 466 residues: Adenosylhomocysteinase (466 aa).

Substrate-binding residues include Thr-57, Asp-132, and Glu-192. 193-195 (TTT) contacts NAD(+). Substrate is bound by residues Lys-222 and Asp-226. NAD(+) is bound by residues Asn-227, 256–261 (GYGDVG), Glu-279, Asn-314, 335–337 (IGH), and Asn-380.

The protein belongs to the adenosylhomocysteinase family. Requires NAD(+) as cofactor.

The protein resides in the cytoplasm. The enzyme catalyses S-adenosyl-L-homocysteine + H2O = L-homocysteine + adenosine. The protein operates within amino-acid biosynthesis; L-homocysteine biosynthesis; L-homocysteine from S-adenosyl-L-homocysteine: step 1/1. May play a key role in the regulation of the intracellular concentration of adenosylhomocysteine. This is Adenosylhomocysteinase from Mesorhizobium japonicum (strain LMG 29417 / CECT 9101 / MAFF 303099) (Mesorhizobium loti (strain MAFF 303099)).